Consider the following 357-residue polypeptide: Neurogenic differentiation factor 1 (357 aa).

The segment at 1-94 is disordered; the sequence is MTKSYSESGL…GPKKKKMTKA (94 aa). Positions 58–78 are enriched in acidic residues; the sequence is EEEEEDEDLEEEEEEEEEEED. The span at 81–93 shows a compositional bias: basic residues; it reads PKRRGPKKKKMTK. Positions 87-93 match the Nuclear localization signal motif; it reads KKKKMTK. The 53-residue stretch at 101-153 folds into the bHLH domain; it reads LRRMKANARERNRMHGLNAALDNLRKVVPCYSKTQKLSKIETLRLAKNYIWAL. Phosphoserine occurs at positions 162, 259, 266, and 274. S336 carries the post-translational modification Phosphoserine; by CaMK2.

As to quaternary structure, efficient DNA-binding requires dimerization with another bHLH protein. Heterodimer with TCF3/E47; the heterodimer is inhibited in presence of ID2, but not NR0B2, to E-box element. Interacts with EP300; the interaction is inhibited by NR0B2. Interacts with RREB1. Interacts with ATOH8. In islet cells, phosphorylated on Ser-274 upon glucose stimulation; which may be required for nuclear localization. In activated neurons, phosphorylated on Ser-336; which promotes dendritic growth. Phosphorylated by MAPK1; phosphorylation regulates heterodimerization and DNA-binding activities. Phosphorylation on Ser-266 and Ser-274 increases transactivation on the insulin promoter in glucose-stimulated insulinoma cells. In terms of tissue distribution, expressed in pancreatic beta cells, pulmonary neuroendocrine cells and retinal interneurons amacrine cells (at protein level). Expressed in endocrine cells of the pancreas. Expressed in the inner layer of cerebellar external granular layer (EGL). Expressed in the Ammon's horn (AH), which includes the CA1-CA3 pyramidal layer and in granule cells of the dentate gyrus (DG). Expressed in photoreceptors of the outer nuclear layer (ONL), in a subset of cells in the lower half of the inner nuclear layer (INL), and in a subset of cells in the ganglion cell layer (GCL) of the retina. Expressed in cholinergic and AII amacrine cell types. Expressed in differentiating neurons of both the central and peripheral nervous systems.

It localises to the cytoplasm. It is found in the nucleus. Its function is as follows. Acts as a transcriptional activator: mediates transcriptional activation by binding to E box-containing promoter consensus core sequences 5'-CANNTG-3'. Associates with the p300/CBP transcription coactivator complex to stimulate transcription of the secretin gene as well as the gene encoding the cyclin-dependent kinase inhibitor CDKN1A. Contributes to the regulation of several cell differentiation pathways, like those that promote the formation of early retinal ganglion cells, inner ear sensory neurons, granule cells forming either the cerebellum or the dentate gyrus cell layer of the hippocampus, endocrine islet cells of the pancreas and enteroendocrine cells of the small intestine. Together with PAX6 or SIX3, is required for the regulation of amacrine cell fate specification. Also required for dendrite morphogenesis and maintenance in the cerebellar cortex. Associates with chromatin to enhancer regulatory elements in genes encoding key transcriptional regulators of neurogenesis. This chain is Neurogenic differentiation factor 1 (Neurod1), found in Mus musculus (Mouse).